A 405-amino-acid chain; its full sequence is Argininosuccinate synthase (405 aa).

9 to 17 is an ATP binding site; that stretch reads AYSGGLDTS. The L-citrulline site is built by Tyr-87 and Ser-92. Gly-117 is an ATP binding site. Positions 119, 123, and 124 each coordinate L-aspartate. L-citrulline is bound at residue Asn-123. 5 residues coordinate L-citrulline: Arg-127, Ser-176, Ser-185, Glu-262, and Tyr-274.

It belongs to the argininosuccinate synthase family. Type 1 subfamily. In terms of assembly, homotetramer.

It is found in the cytoplasm. The enzyme catalyses L-citrulline + L-aspartate + ATP = 2-(N(omega)-L-arginino)succinate + AMP + diphosphate + H(+). Its pathway is amino-acid biosynthesis; L-arginine biosynthesis; L-arginine from L-ornithine and carbamoyl phosphate: step 2/3. The polypeptide is Argininosuccinate synthase (Caldicellulosiruptor saccharolyticus (strain ATCC 43494 / DSM 8903 / Tp8T 6331)).